A 626-amino-acid chain; its full sequence is (R)-linalool synthase 2, chloroplastic (626 aa).

The N-terminal 21 residues, 1-21 (MAFVSIAPLASRCCVHKSFVS), are a transit peptide targeting the chloroplast. 3 residues coordinate Mg(2+): Asp-377, Asp-381, and Glu-529. Positions 377 to 381 (DDIYD) match the DDXXD motif motif.

The protein belongs to the terpene synthase family. Tpsd subfamily. It depends on Mg(2+) as a cofactor. The cofactor is Mn(2+).

The protein localises to the plastid. Its subcellular location is the chloroplast. It catalyses the reaction (2E)-geranyl diphosphate + H2O = (R)-linalool + diphosphate. It functions in the pathway terpene metabolism; oleoresin biosynthesis. Terpene synthase (mono-TPS) involved in the biosynthesis of monoterpene natural products included in conifer oleoresin secretions and volatile emissions; these compounds contribute to biotic and abiotic stress defense against herbivores and pathogens. Catalyzes the conversion of (2E)-geranyl diphosphate (GPP) to (R)-linalool. The sequence is that of (R)-linalool synthase 2, chloroplastic from Picea sitchensis (Sitka spruce).